Consider the following 276-residue polypeptide: Energy-coupling factor transporter ATP-binding protein EcfA1 (276 aa).

Positions 2-237 (IEIKNLKFKY…GSELVDLGLD (236 aa)) constitute an ABC transporter domain. ATP is bound at residue 37–44 (GHNGSGKS).

It belongs to the ABC transporter superfamily. Energy-coupling factor EcfA family. Forms a stable energy-coupling factor (ECF) transporter complex composed of 2 membrane-embedded substrate-binding proteins (S component), 2 ATP-binding proteins (A component) and 2 transmembrane proteins (T component).

The protein localises to the cell membrane. In terms of biological role, ATP-binding (A) component of a common energy-coupling factor (ECF) ABC-transporter complex. Unlike classic ABC transporters this ECF transporter provides the energy necessary to transport a number of different substrates. The sequence is that of Energy-coupling factor transporter ATP-binding protein EcfA1 from Streptococcus thermophilus (strain CNRZ 1066).